A 221-amino-acid chain; its full sequence is GTP-binding nuclear protein Ran2 (221 aa).

The Small GTPase Ran-type domain maps to 10-174; the sequence is DYPSFKLVIV…LYLARKLAGD (165 aa). Position 21 to 28 (21 to 28) interacts with GTP; it reads DGGTGKTT. A switch-I region spans residues 40-48; it reads KKYEPTIGV. GTP-binding positions include Gly-71, 125–128, and 153–155; these read NKVD and SAK. A switch-II region spans residues 71–87; the sequence is GQEKFGGLRDGYYIHGQ.

Belongs to the small GTPase superfamily. Ran family. Found in a nuclear export complex with RanGTP, exportin and pre-miRNA.

Its subcellular location is the nucleus. In terms of biological role, GTP-binding protein involved in nucleocytoplasmic transport. Required for the import of protein into the nucleus and also for RNA export. Involved in chromatin condensation and control of cell cycle. The chain is GTP-binding nuclear protein Ran2 (RAN2) from Solanum lycopersicum (Tomato).